The following is a 213-amino-acid chain: Adenylate kinase (213 aa).

An ATP-binding site is contributed by 10–15; the sequence is GAGKGT. An NMP region spans residues 30 to 59; the sequence is STGDMLRAAVAAGSEVGLRAKAAMESGSLV. AMP contacts are provided by residues Thr31, Arg36, 57–59, 85–88, and Gln92; these read SLV and GFPR. Residues 126 to 163 form an LID region; that stretch reads GRSSCEKCGEGYHDSFKPSAQPNVCDKCSGTLKRRADD. Position 127 (Arg127) interacts with ATP. Zn(2+) is bound by residues Cys130, Cys133, Cys150, and Cys153. Residues Arg160 and Arg171 each coordinate AMP. Gln199 serves as a coordination point for ATP.

This sequence belongs to the adenylate kinase family. Monomer.

It localises to the cytoplasm. The enzyme catalyses AMP + ATP = 2 ADP. It participates in purine metabolism; AMP biosynthesis via salvage pathway; AMP from ADP: step 1/1. Functionally, catalyzes the reversible transfer of the terminal phosphate group between ATP and AMP. Plays an important role in cellular energy homeostasis and in adenine nucleotide metabolism. The polypeptide is Adenylate kinase (Magnetococcus marinus (strain ATCC BAA-1437 / JCM 17883 / MC-1)).